Reading from the N-terminus, the 286-residue chain is Polyamine aminopropyltransferase (286 aa).

The PABS domain maps to 5–238; the sequence is TMWHETLHDQ…GIMTFAWATD (234 aa). An S-methyl-5'-thioadenosine-binding site is contributed by Gln-33. The spermidine site is built by His-64 and Asp-88. Residues Glu-108 and 140–141 each bind S-methyl-5'-thioadenosine; that span reads DG. The active-site Proton acceptor is the Asp-158. Spermidine is bound at residue 158 to 161; that stretch reads DCTD. Residue Pro-165 participates in S-methyl-5'-thioadenosine binding.

Belongs to the spermidine/spermine synthase family. Homodimer or homotetramer.

The protein resides in the cytoplasm. The catalysed reaction is S-adenosyl 3-(methylsulfanyl)propylamine + putrescine = S-methyl-5'-thioadenosine + spermidine + H(+). It functions in the pathway amine and polyamine biosynthesis; spermidine biosynthesis; spermidine from putrescine: step 1/1. In terms of biological role, catalyzes the irreversible transfer of a propylamine group from the amino donor S-adenosylmethioninamine (decarboxy-AdoMet) to putrescine (1,4-diaminobutane) to yield spermidine. The polypeptide is Polyamine aminopropyltransferase (Salmonella typhi).